We begin with the raw amino-acid sequence, 323 residues long: Thioredoxin reductase (323 aa).

42 to 49 (YRAEADGA) provides a ligand contact to FAD. Cys-143 and Cys-146 are joined by a disulfide. 286 to 295 (DVLCNEVKQA) contributes to the FAD binding site.

This sequence belongs to the class-II pyridine nucleotide-disulfide oxidoreductase family. Homodimer. It depends on FAD as a cofactor.

Its subcellular location is the cytoplasm. It carries out the reaction [thioredoxin]-dithiol + NADP(+) = [thioredoxin]-disulfide + NADPH + H(+). In Aquifex aeolicus (strain VF5), this protein is Thioredoxin reductase (trxB).